The sequence spans 220 residues: uncharacterized protein (220 aa).

This is an uncharacterized protein from Archaeoglobus fulgidus (strain ATCC 49558 / DSM 4304 / JCM 9628 / NBRC 100126 / VC-16).